The sequence spans 291 residues: 3-hydroxy-5-phosphonooxypentane-2,4-dione thiolase (291 aa).

The active-site Schiff-base intermediate with substrate is Lys203.

Belongs to the DeoC/FbaB aldolase family. As to quaternary structure, homodecamer.

It is found in the cytoplasm. The enzyme catalyses dihydroxyacetone phosphate + acetyl-CoA = 3-hydroxy-2,4-dioxopentyl phosphate + CoA. In terms of biological role, involved in the degradation of phospho-AI-2, thereby terminating induction of the lsr operon and closing the AI-2 signaling cycle. Catalyzes the transfer of an acetyl moiety from 3-hydroxy-5-phosphonooxypentane-2,4-dione to CoA to form glycerone phosphate and acetyl-CoA. The chain is 3-hydroxy-5-phosphonooxypentane-2,4-dione thiolase from Salmonella typhimurium (strain LT2 / SGSC1412 / ATCC 700720).